Here is a 542-residue protein sequence, read N- to C-terminus: Glutamyl-tRNA(Gln) amidotransferase subunit B, mitochondrial (542 aa).

The transit peptide at Met-1–Ile-66 directs the protein to the mitochondrion.

Belongs to the GatB/GatE family. GatB subfamily. As to quaternary structure, subunit of the heterotrimeric GatFAB amidotransferase (AdT) complex, composed of A, B and F subunits.

The protein localises to the mitochondrion. The catalysed reaction is L-glutamyl-tRNA(Gln) + L-glutamine + ATP + H2O = L-glutaminyl-tRNA(Gln) + L-glutamate + ADP + phosphate + H(+). Functionally, allows the formation of correctly charged Gln-tRNA(Gln) through the transamidation of misacylated Glu-tRNA(Gln) in the mitochondria. The reaction takes place in the presence of glutamine and ATP through an activated gamma-phospho-Glu-tRNA(Gln). This is Glutamyl-tRNA(Gln) amidotransferase subunit B, mitochondrial from Zygosaccharomyces rouxii (strain ATCC 2623 / CBS 732 / NBRC 1130 / NCYC 568 / NRRL Y-229).